Reading from the N-terminus, the 239-residue chain is 1-(5-phosphoribosyl)-5-[(5-phosphoribosylamino)methylideneamino] imidazole-4-carboxamide isomerase (239 aa).

Asp8 functions as the Proton acceptor in the catalytic mechanism. Asp129 serves as the catalytic Proton donor.

It belongs to the HisA/HisF family.

The protein localises to the cytoplasm. It catalyses the reaction 1-(5-phospho-beta-D-ribosyl)-5-[(5-phospho-beta-D-ribosylamino)methylideneamino]imidazole-4-carboxamide = 5-[(5-phospho-1-deoxy-D-ribulos-1-ylimino)methylamino]-1-(5-phospho-beta-D-ribosyl)imidazole-4-carboxamide. It functions in the pathway amino-acid biosynthesis; L-histidine biosynthesis; L-histidine from 5-phospho-alpha-D-ribose 1-diphosphate: step 4/9. The chain is 1-(5-phosphoribosyl)-5-[(5-phosphoribosylamino)methylideneamino] imidazole-4-carboxamide isomerase from Legionella pneumophila (strain Paris).